A 200-amino-acid polypeptide reads, in one-letter code: Small ribosomal subunit protein uS5 (200 aa).

The span at Met1–Asp22 shows a compositional bias: basic and acidic residues. The interval Met1–Ser26 is disordered. In terms of domain architecture, S5 DRBM spans Leu28–Ile91.

The protein belongs to the universal ribosomal protein uS5 family. As to quaternary structure, part of the 30S ribosomal subunit. Contacts proteins S4 and S8.

Functionally, with S4 and S12 plays an important role in translational accuracy. In terms of biological role, located at the back of the 30S subunit body where it stabilizes the conformation of the head with respect to the body. This chain is Small ribosomal subunit protein uS5, found in Hyphomonas neptunium (strain ATCC 15444).